Reading from the N-terminus, the 248-residue chain is Probable transcriptional regulatory protein Avi_3631 (248 aa).

Belongs to the TACO1 family.

It is found in the cytoplasm. The chain is Probable transcriptional regulatory protein Avi_3631 from Allorhizobium ampelinum (strain ATCC BAA-846 / DSM 112012 / S4) (Agrobacterium vitis (strain S4)).